The sequence spans 134 residues: Kinetochore-binding protein 3 (134 aa).

Its subcellular location is the nucleus. It localises to the chromosome. The protein resides in the centromere. It is found in the kinetochore. This is Kinetochore-binding protein 3 (kbp-3) from Caenorhabditis elegans.